The primary structure comprises 137 residues: Small ribosomal subunit protein uS12 (137 aa).

The interval M1–K57 is disordered. D102 carries the post-translational modification 3-methylthioaspartic acid.

This sequence belongs to the universal ribosomal protein uS12 family. Part of the 30S ribosomal subunit. Contacts proteins S8 and S17. May interact with IF1 in the 30S initiation complex.

In terms of biological role, with S4 and S5 plays an important role in translational accuracy. Its function is as follows. Interacts with and stabilizes bases of the 16S rRNA that are involved in tRNA selection in the A site and with the mRNA backbone. Located at the interface of the 30S and 50S subunits, it traverses the body of the 30S subunit contacting proteins on the other side and probably holding the rRNA structure together. The combined cluster of proteins S8, S12 and S17 appears to hold together the shoulder and platform of the 30S subunit. The chain is Small ribosomal subunit protein uS12 from Streptococcus suis (strain 98HAH33).